We begin with the raw amino-acid sequence, 205 residues long: Probable thymidylate kinase (205 aa).

10–17 (GIDGSGKT) contacts ATP.

This sequence belongs to the thymidylate kinase family.

The catalysed reaction is dTMP + ATP = dTDP + ADP. This chain is Probable thymidylate kinase (tmk), found in Pyrococcus horikoshii (strain ATCC 700860 / DSM 12428 / JCM 9974 / NBRC 100139 / OT-3).